The primary structure comprises 284 residues: MGLASSLFVPYAAYLRVYEPLAAFPEPERSHWYRYAGRADPPTAQDELRRSLVDLLPTPPVAVPVHESGDAFVAVVDGVTCVCPWRTRLRGWEALEALPELLPAPVLDAALPQVVRRQAADDHERWRERNPDARPWIRTATWHVPVRWFALFTAGEREYVQRSGEGEKAERPVLRYRTPMVEARRRVARGLRVLREALNESPLIDGLEDVGRWLEEFHPRSLVELDYGGLVHALTDDWLAGDRSAADVTEGLEALRAGDGVRAGEVYQRLVERWRAVREREFAS.

This is an uncharacterized protein from Streptomyces fradiae (Streptomyces roseoflavus).